We begin with the raw amino-acid sequence, 514 residues long: MTTRKRPLALLILDGWGYRENTQKNAVYHANTPVLDRLNAQYPNSLISGSGLDVGLPDGQMGNSEVGHINIGSGRIVYQELTRIGKAIEDGEFDKNQALVESIDKAIANQGAVHIMGLLSPGGVHSHESHIEAMCRLAVARGAKQVYLHAFLDGRDTPPRSAKGSLAHFDDLFTTLGTGRVASVIGRYYAMDRDNRWDRVSQAYELITEGKSLHQYSNAVEALEAAYARDENDEFVGSSAILDAQGDSAQLADGDALIFMNFRADRARQITRSFVDADFDGFERNVTPKAHFVMLTEYAADIKAAIAYPSTNLVNTLGEALQDSDKTQLRISETEKYAHVTFFFNGGKEEPFKGEDRILIQSPKVATYDLQPEMSSAELTDKLVEAIESTKYDVIICNYPNGDMVGHTGSFDAAVKACEAVDTCIGRVVDALAKVDGECLITADHGNAEQMTDEQTGQAHTAHTSELVPLIYVGRNGSIENDGRLSDLAPTMLTLMGEEVPSEMTGRSIIKLDE.

Mn(2+)-binding residues include D14 and S64. The active-site Phosphoserine intermediate is the S64. Residues H125, 155-156 (RD), R187, R193, 263-266 (RADR), and K336 contribute to the substrate site. 5 residues coordinate Mn(2+): D403, H407, D444, H445, and H463.

This sequence belongs to the BPG-independent phosphoglycerate mutase family. As to quaternary structure, monomer. The cofactor is Mn(2+).

The enzyme catalyses (2R)-2-phosphoglycerate = (2R)-3-phosphoglycerate. Its pathway is carbohydrate degradation; glycolysis; pyruvate from D-glyceraldehyde 3-phosphate: step 3/5. Catalyzes the interconversion of 2-phosphoglycerate and 3-phosphoglycerate. In Shewanella sediminis (strain HAW-EB3), this protein is 2,3-bisphosphoglycerate-independent phosphoglycerate mutase.